The following is a 58-amino-acid chain: uncharacterized protein (58 aa).

It is found in the plastid. It localises to the chloroplast. This is an uncharacterized protein from Chlamydomonas reinhardtii (Chlamydomonas smithii).